Reading from the N-terminus, the 146-residue chain is Microsomal glutathione S-transferase 2 (146 aa).

3 helical membrane-spanning segments follow: residues 6–26 (ILLA…AMQV), 59–79 (FYPI…QVFA), and 111–131 (SLGV…NSFL).

It belongs to the MAPEG family. As to quaternary structure, homotrimer.

It is found in the endoplasmic reticulum membrane. It localises to the microsome membrane. The catalysed reaction is RX + glutathione = an S-substituted glutathione + a halide anion + H(+). The enzyme catalyses 1-chloro-2,4-dinitrobenzene + glutathione = 2,4-dinitrophenyl-S-glutathione + chloride + H(+). It carries out the reaction leukotriene C4 = leukotriene A4 + glutathione. It catalyses the reaction (5S)-hydroperoxy-(6E,8Z,11Z,14Z)-eicosatetraenoate + 2 glutathione = (5S)-hydroxy-(6E,8Z,11Z,14Z)-eicosatetraenoate + glutathione disulfide + H2O. Each monomer binds on GSH molecule but only one subunit is catalytically active. In terms of biological role, catalyzes several different glutathione-dependent reactions. Catalyzes the glutathione-dependent reduction of lipid hydroperoxides, such as 5-HPETE. Has glutathione transferase activity, toward xenobiotic electrophiles, such as 1-chloro-2, 4-dinitrobenzene (CDNB). Also catalyzes the conjugation of leukotriene A4 with reduced glutathione to form leukotriene C4 (LTC4). Involved in oxidative DNA damage induced by ER stress and anticancer agents by activating LTC4 biosynthetic machinery in nonimmune cells. This chain is Microsomal glutathione S-transferase 2 (MGST2), found in Bos taurus (Bovine).